A 311-amino-acid chain; its full sequence is MTGVSDIQEAVAQIKAAGPSKPRLARDPVNQPMINNWVEAIGDRNPIYVDDAAARAAGHPGIVAPPAMIQVWTMMGLGGVRPKDDPLGPIIKLFDDAGYIGVVATNCEQTYHRYLLPGEQVSISAELGDVVGPKQTALGEGWFINQHIVWQVGDEDVAEMNWRILKFKPAGSPSSVPDDLDPDAMMRPSSSRDTAFFWDGVKAHELRIQRLADGSLRHPPVPAVWQDKSVPINYVVSSGRGTVFSFVVHHAPKVPGRTVPFVIALVELEEGVRMLGELRGADPARVAIGMPVRATYIDFPDWSLYAWEPDE.

Positions 198–295 are DUF35; it reads WDGVKAHELR…VAIGMPVRAT (98 aa).

This sequence belongs to the thioester dehydratase family. In terms of assembly, heterodimer composed of ChsH1 and ChsH2. Two heterodimers combine to form a heterotetramer. The complex interacts with Ltp2 via the DUF35 C-terminal region of ChsH2. The ChsH1-ChsH2-Ltp2 protein complex is composed of two protomers that form a heterohexameric structure through the Ltp2 dimerization interface.

The enzyme catalyses 3-oxochola-4,17-dien-22-oyl-CoA + H2O = 17-hydroxy-3-oxochol-4-en-22-oyl-CoA. The catalysed reaction is (2E)-octenoyl-CoA + H2O = 3-hydroxyoctanoyl-CoA. It catalyses the reaction (2E)-decenoyl-CoA + H2O = 3-hydroxydecanoyl-CoA. It participates in steroid metabolism; cholesterol degradation. In the absence of the Ltp2 aldolase, ChsH1/ChsH2 can hydrate only about 30% of the 3-OPDC-CoA substrate. Complete turnover requires the presence of Ltp2. In terms of biological role, involved in cholesterol side chain degradation. Catalyzes the hydration of 3-oxo-4,17-pregnadiene-20-carboxyl-CoA (3-OPDC-CoA) to form 17-hydroxy-3-oxo-4-pregnene-20-carboxyl-CoA (17-HOPC-CoA), in the modified beta-oxidation pathway for cholesterol side chain degradation. Can also use octenoyl-CoA and decenoyl-CoA, with lower efficiency. The polypeptide is 3-oxo-4,17-pregnadiene-20-carboxyl-CoA hydratase alpha subunit (Mycobacterium tuberculosis (strain ATCC 25618 / H37Rv)).